Consider the following 469-residue polypeptide: MASAVPLTMMWEEVTCSICLDPMVEPMSIECGHSFCQECISEVGKEGGSVCPVCRRHFLLQNLRPNRQVANMVDNLRKISQGAKESPHGELCVVHREKIHLFCEEDGKALCWVCSQSQKHRDHPMVPIEEAAQEYQEKLQVALNKLRHKQELAEKLELDIAMKKASWKGKVEAHKLRIHEEFVRQKNFLAEEEQKQLQKLEEEERQQLRTLGDTEARLAQQIQALQELIAELERRRRGSALELLQEVKSVLERSESWNLKELDVASTDLRNVFYVPGIKKMLRTCGVHITLDPQTANPWLILSENRRQVRLANTRQEVPENEERFDSYPMVLGAQRFDSGKVYWEVDVTGKEAWDLGVCRDNVRRKGQFLLNSDTGFWIIWLWNKQKYEAGTCPQTPLHLQVPPNRIGIFLDYEASTVSFYNITDHASLIYTFSECAFAGPLRPFFNPGFNDRGTNSAPLILCPLKTGW.

Residues 16-55 (CSICLDPMVEPMSIECGHSFCQECISEVGKEGGSVCPVCR) form an RING-type zinc finger. A B box-type zinc finger spans residues 87-128 (PHGELCVVHREKIHLFCEEDGKALCWVCSQSQKHRDHPMVPI). Residues Cys-92, His-95, Cys-114, and His-120 each coordinate Zn(2+). Positions 128–245 (IEEAAQEYQE…RRGSALELLQ (118 aa)) form a coiled coil. A Phosphoserine modification is found at Ser-266. The 200-residue stretch at 268 to 467 (DLRNVFYVPG…APLILCPLKT (200 aa)) folds into the B30.2/SPRY domain.

Belongs to the TRIM/RBCC family. Homotrimer. Interacts (via C-terminus) with IRF8 (via C-terminus). Component of a SCF(SKP2)-like complex containing CUL1, SKP1, TRIM21 and SKP2. Interacts with CALR, CUL1, FBXW11, HSPA5, IKBKB, IRF3, SKP1 and VCP. Interacts with SKP2; the interaction with SKP2 does not depend on an intact F-box domain. Interacts (via N-terminus and C-terminus) with DCP2 (via N-terminus and C-terminus). Interacts with ULK1, BECN1 and with ATG8 family members, including GABARAP, GABARAPL1, GABARAPL2 and MAP1LC3C/LC3C. Interacts with TRIM21 and SQSTM1/sequestosome 1. Interacts with IRF3. Interacts (via the SPRY domain) with NMI (via coiled-coil domain); the interaction promotes 'Lys-63'-linked ubiquitination of NMI. Interacts with IFI35 and NMI; the interaction facilitates NMI-IFI35 complex formation. Autoubiquitinated; does not lead to its proteasomal degradation. Deubiquitinated by USP4; leading to its stabilization.

It is found in the cytoplasm. It localises to the cytoplasmic vesicle. The protein resides in the autophagosome. The protein localises to the nucleus. Its subcellular location is the P-body. It is found in the stress granule. It carries out the reaction S-ubiquitinyl-[E2 ubiquitin-conjugating enzyme]-L-cysteine + [acceptor protein]-L-lysine = [E2 ubiquitin-conjugating enzyme]-L-cysteine + N(6)-ubiquitinyl-[acceptor protein]-L-lysine.. It participates in protein modification; protein ubiquitination. Its function is as follows. E3 ubiquitin-protein ligase whose activity is dependent on E2 enzymes, UBE2D1, UBE2D2, UBE2E1 and UBE2E2. Forms a ubiquitin ligase complex in cooperation with the E2 UBE2D2 that is used not only for the ubiquitination of USP4 and IKBKB but also for its self-ubiquitination. Component of cullin-RING-based SCF (SKP1-CUL1-F-box protein) E3 ubiquitin-protein ligase complexes such as SCF(SKP2)-like complexes. A TRIM21-containing SCF(SKP2)-like complex is shown to mediate ubiquitination of CDKN1B ('Thr-187' phosphorylated-form), thereby promoting its degradation by the proteasome. Monoubiquitinates IKBKB that will negatively regulates Tax-induced NF-kappa-B signaling. Negatively regulates IFN-beta production post-pathogen recognition by catalyzing polyubiquitin-mediated degradation of IRF3. Mediates the ubiquitin-mediated proteasomal degradation of IgG1 heavy chain, which is linked to the VCP-mediated ER-associated degradation (ERAD) pathway. Promotes IRF8 ubiquitination, which enhanced the ability of IRF8 to stimulate cytokine genes transcription in macrophages. Plays a role in the regulation of the cell cycle progression. Enhances the decapping activity of DCP2. Exists as a ribonucleoprotein particle present in all mammalian cells studied and composed of a single polypeptide and one of four small RNA molecules. At least two isoforms are present in nucleated and red blood cells, and tissue specific differences in RO/SSA proteins have been identified. The common feature of these proteins is their ability to bind HY RNAs.2. Involved in the regulation of innate immunity and the inflammatory response in response to IFNG/IFN-gamma. Organizes autophagic machinery by serving as a platform for the assembly of ULK1, Beclin 1/BECN1 and ATG8 family members and recognizes specific autophagy targets, thus coordinating target recognition with assembly of the autophagic apparatus and initiation of autophagy. Also regulates autophagy through FIP200/RB1CC1 ubiquitination and subsequent decreased protein stability. Represses the innate antiviral response by facilitating the formation of the NMI-IFI35 complex through 'Lys-63'-linked ubiquitination of NMI. During viral infection, promotes cell pyroptosis by mediating 'Lys-6'-linked ubiquitination of ISG12a/IFI27, facilitating its translocation into the mitochondria and subsequent CASP3 activation. When up-regulated through the IFN/JAK/STAT signaling pathway, promotes 'Lys-27'-linked ubiquitination of MAVS, leading to the recruitment of TBK1 and up-regulation of innate immunity. Mediates 'Lys-63'-linked polyubiquitination of G3BP1 in response to heat shock, leading to stress granule disassembly. This chain is E3 ubiquitin-protein ligase TRIM21 (TRIM21), found in Bos taurus (Bovine).